The chain runs to 330 residues: Cobalamin biosynthesis protein CobD (330 aa).

A run of 4 helical transmembrane segments spans residues 60–80, 153–173, 227–247, and 308–328; these read TLVI…PPIV, GIIA…LLGV, LGIV…WKIF, and IVLF…FVLT.

It belongs to the CobD/CbiB family.

The protein localises to the cell membrane. It functions in the pathway cofactor biosynthesis; adenosylcobalamin biosynthesis. Its function is as follows. Converts cobyric acid to cobinamide by the addition of aminopropanol on the F carboxylic group. This chain is Cobalamin biosynthesis protein CobD, found in Desulfotalea psychrophila (strain LSv54 / DSM 12343).